The primary structure comprises 199 residues: Transgelin-3 (199 aa).

The region spanning alanine 24 to alanine 136 is the Calponin-homology (CH) domain. Residue serine 163 is modified to Phosphoserine. The Calponin-like repeat unit spans residues isoleucine 174–methionine 199. Over residues methionine 178–glycine 188 the composition is skewed to polar residues. Residues methionine 178–methionine 199 form a disordered region.

It belongs to the calponin family. In terms of tissue distribution, abundant and ubiquitous expression in neurons.

This is Transgelin-3 (Tagln3) from Rattus norvegicus (Rat).